The sequence spans 673 residues: MLKELRNIGIIAHIDAGKTTTTERILYYTGLTHKMGETHDGDSIMDFLPWEKERGITVASAATRCFWKGNTINIIDTPGHVDFTAEVERSLRILDGAVVIFCGKGGVEPQSETVWRQADKYQIPRIAYVNKMDAVGADFFRVIEQIKQRLGSNPLVISLPVFKEECFSGIIDLIKMKYYTFAGKLGNDIAEESIPSEYTETAEEWRSVLVEKLAETDETLLDLYYNNEEIDAGLLSRVIRTNTVSGNMVPVCCGSSYRNIGVQLLLDSIVDYLPSPLDLPGSKAVIMETTETINIMPDSQDAFSALVFKIINDRHVGRLAFARIYSGKLKAGTVVFNSSKNKRERVGRLLRIHAEHREEINEVAAGDIVAIIGLKDIGTGDTLCSENFPLLLETIDFPQPVIQIAIEPKNQAGLDKISEALNRISAEDPTFKISYNKETGQVLLAGMGELHLEIVAERLAREFKLDFNTGQPQVAYRETIGKSAEQVTRYVKQTGGKGQFAHVVLRLEPGEGFEFINRISQGSIPREYIPAVESGIKQALEEGVLKGYPVVNVKATLLDGSFHEVDSSEMAFRTAAFLATRECLKKAHPRMLEPVMRLEIVSPEEYTGNIINNITNRRGKLESLEMENHTQIIRGCVPLAELFGYSTVLRSLTQGRAGFSMEFSHYEERHLAS.

Positions Lys-3–Leu-277 constitute a tr-type G domain. GTP is bound by residues Ala-12–Thr-19, Asp-76–His-80, and Asn-130–Asp-133.

Belongs to the TRAFAC class translation factor GTPase superfamily. Classic translation factor GTPase family. EF-G/EF-2 subfamily.

The protein localises to the cytoplasm. Catalyzes the GTP-dependent ribosomal translocation step during translation elongation. During this step, the ribosome changes from the pre-translocational (PRE) to the post-translocational (POST) state as the newly formed A-site-bound peptidyl-tRNA and P-site-bound deacylated tRNA move to the P and E sites, respectively. Catalyzes the coordinated movement of the two tRNA molecules, the mRNA and conformational changes in the ribosome. The polypeptide is Elongation factor G 1 (Syntrophomonas wolfei subsp. wolfei (strain DSM 2245B / Goettingen)).